Consider the following 115-residue polypeptide: NAD(P)H-quinone oxidoreductase subunit M (115 aa).

The protein belongs to the complex I NdhM subunit family. In terms of assembly, NDH-1 can be composed of about 15 different subunits; different subcomplexes with different compositions have been identified which probably have different functions.

The protein resides in the cellular thylakoid membrane. It carries out the reaction a plastoquinone + NADH + (n+1) H(+)(in) = a plastoquinol + NAD(+) + n H(+)(out). It catalyses the reaction a plastoquinone + NADPH + (n+1) H(+)(in) = a plastoquinol + NADP(+) + n H(+)(out). In terms of biological role, NDH-1 shuttles electrons from an unknown electron donor, via FMN and iron-sulfur (Fe-S) centers, to quinones in the respiratory and/or the photosynthetic chain. The immediate electron acceptor for the enzyme in this species is believed to be plastoquinone. Couples the redox reaction to proton translocation, and thus conserves the redox energy in a proton gradient. Cyanobacterial NDH-1 also plays a role in inorganic carbon-concentration. This chain is NAD(P)H-quinone oxidoreductase subunit M, found in Prochlorococcus marinus (strain AS9601).